The chain runs to 506 residues: Anaerobic nitric oxide reductase transcription regulator NorR (506 aa).

At aspartate 57 the chain carries 4-aspartylphosphate. The 230-residue stretch at 187–416 (MIGLSPAMTQ…LEHAIHRAVV (230 aa)) folds into the Sigma-54 factor interaction domain. Residues 215 to 222 (GETGTGKE) and 278 to 287 (ADNGTLFLDE) each bind ATP. Residues 481–500 (WAASARALETDVANLHRLAK) constitute a DNA-binding region (H-T-H motif).

It functions in the pathway nitrogen metabolism; nitric oxide reduction. Required for the expression of anaerobic nitric oxide (NO) reductase, acts as a transcriptional activator for at least the norVW operon. Activation also requires sigma-54. The chain is Anaerobic nitric oxide reductase transcription regulator NorR from Salmonella agona (strain SL483).